Reading from the N-terminus, the 464-residue chain is Fumarate hydratase class II (464 aa).

Residues 96 to 98 (SGT), 127 to 130 (HPND), 137 to 139 (SSN), and Thr185 contribute to the substrate site. The active-site Proton donor/acceptor is the His186. The active site involves Ser316. Substrate contacts are provided by residues Ser317 and 322 to 324 (KVN).

The protein belongs to the class-II fumarase/aspartase family. Fumarase subfamily. Homotetramer.

It localises to the cytoplasm. It catalyses the reaction (S)-malate = fumarate + H2O. It participates in carbohydrate metabolism; tricarboxylic acid cycle; (S)-malate from fumarate: step 1/1. Involved in the TCA cycle. Catalyzes the stereospecific interconversion of fumarate to L-malate. This Pseudomonas syringae pv. tomato (strain ATCC BAA-871 / DC3000) protein is Fumarate hydratase class II.